Here is a 406-residue protein sequence, read N- to C-terminus: Vacuole membrane protein 1 (406 aa).

The segment at 1 to 22 (MAENGTDCEQRRVGMPKEQNNG) is disordered. Residues 1-42 (MAENGTDCEQRRVGMPKEQNNGSFQDPSFMCNRKRRDREERQ) lie on the Cytoplasmic side of the membrane. The chain crosses the membrane as a helical span at residues 43–63 (SIVLWRKPLITLQYFILEVLI). Over 64–76 (NLKEWSVRLWHRR) the chain is Extracellular. A helical membrane pass occupies residues 77–97 (MMVVSVLLLLAVLSVAYYIEG). At 98 to 110 (EHQQCVQYIEKKC) the chain is on the cytoplasmic side. The chain crosses the membrane as a helical span at residues 111–131 (LWCAYWVGLGILSSVGLGTGL). At 132–250 (HTFLLYLGPH…ATRAKLTVQN (119 aa)) the chain is on the extracellular side. A VTT domain region spans residues 173-316 (GTEGAISLWT…FVIITFSKHI (144 aa)). The helical transmembrane segment at 251 to 271 (LVQKVGFLGILACASIPNPLF) threads the bilayer. The Cytoplasmic segment spans residues 272 to 273 (DL). The chain crosses the membrane as a helical span at residues 274 to 294 (AGITCGHFLVPFWTFFGATLI). The Extracellular portion of the chain corresponds to 295–306 (GKAIIKMHIQKL). Residues 307 to 327 (FVIITFSKHIVEQMVSLIGVI) traverse the membrane as a helical segment. Over 328 to 363 (PSIGPSLQKPFQEYLEAQRKKLHHKGDSGTPQSENW) the chain is Cytoplasmic. A helical membrane pass occupies residues 364 to 384 (LSWAFEKLVIIMVFYFILSII). Topologically, residues 385–406 (NSMAQSYAKRVQQKKLSVEKTK) are extracellular.

This sequence belongs to the VMP1 family.

It is found in the endoplasmic reticulum-Golgi intermediate compartment membrane. It localises to the cell membrane. The protein resides in the vacuole membrane. The protein localises to the endoplasmic reticulum membrane. It carries out the reaction a 1,2-diacyl-sn-glycero-3-phospho-L-serine(in) = a 1,2-diacyl-sn-glycero-3-phospho-L-serine(out). The enzyme catalyses cholesterol(in) = cholesterol(out). The catalysed reaction is a 1,2-diacyl-sn-glycero-3-phosphocholine(in) = a 1,2-diacyl-sn-glycero-3-phosphocholine(out). It catalyses the reaction a 1,2-diacyl-sn-glycero-3-phosphoethanolamine(in) = a 1,2-diacyl-sn-glycero-3-phosphoethanolamine(out). In terms of biological role, phospholipid scramblase involved in lipid homeostasis and membrane dynamics processes. Has phospholipid scramblase activity toward cholesterol and phosphatidylserine, as well as phosphatidylethanolamine and phosphatidylcholine. Required for autophagosome formation: participates in early stages of autophagosome biogenesis at the endoplasmic reticulum (ER) membrane by reequilibrating the leaflets of the ER as lipids are extracted by atg2 (atg2a or atg2b) to mediate autophagosome assembly. In addition to autophagy, involved in other processes in which phospholipid scramblase activity is required. Modulates ER contacts with lipid droplets, mitochondria and endosomes. This chain is Vacuole membrane protein 1, found in Xenopus laevis (African clawed frog).